A 504-amino-acid polypeptide reads, in one-letter code: Cytochrome P450 6B6 (504 aa).

Cysteine 445 is a heme binding site.

It belongs to the cytochrome P450 family. Heme is required as a cofactor.

Its subcellular location is the endoplasmic reticulum membrane. The protein resides in the microsome membrane. It catalyses the reaction an organic molecule + reduced [NADPH--hemoprotein reductase] + O2 = an alcohol + oxidized [NADPH--hemoprotein reductase] + H2O + H(+). This Helicoverpa armigera (Cotton bollworm) protein is Cytochrome P450 6B6 (CYP6B6).